The primary structure comprises 72 residues: Lantibiotic Flvbeta.e (72 aa).

The propeptide at 1-34 (MNNKEFNMEQFKKLAAVVSEDELDEMLDENVTGA) is cleaved by FlvT. The lanthionine (Ser-Cys); by FlvM2 cross-link spans 36-40 (SSIPC). S37 carries the 2,3-didehydroalanine (Ser); by FlvM2 modification. 2,3-didehydrobutyrine; by FlvM2 occurs at positions 48 and 49. 3 cross-links (beta-methyllanthionine (Thr-Cys); by FlvM2) span residues 55–61 (TTGFDWC), 63–66 (TGAC), and 67–70 (TTSC).

Post-translationally, contains LL-lanthionine and DL-beta-methyllanthionine, when coepressed in E.coli with the flavecin synthetase FlvM2.

Its subcellular location is the secreted. In terms of biological role, lanthionine-containing peptide antibiotic (lantibiotic) that is probably active on Gram-positive bacteria, since its analog [Del1]Flvbeta.e shows antibacterial activity against Gram-positive bacteria. This activity is not synergistically enhanced by [Del2]Flvalpha.a, an analog of Flvalpha.a, which is encoded by the same operon than Flvbeta.e. The bactericidal activity of lantibiotics is based on depolarization of energized bacterial cytoplasmic membranes, initiated by the formation of aqueous transmembrane pores. The protein is Lantibiotic Flvbeta.e of Ruminococcus flavefaciens.